The sequence spans 171 residues: Co-chaperone protein HscB (171 aa).

The J domain occupies 2-74; it reads DYFTLFGLPA…LTRAEYLLSL (73 aa).

Belongs to the HscB family. Interacts with HscA and stimulates its ATPase activity. Interacts with IscU.

Functionally, co-chaperone involved in the maturation of iron-sulfur cluster-containing proteins. Seems to help targeting proteins to be folded toward HscA. The polypeptide is Co-chaperone protein HscB (Salmonella choleraesuis (strain SC-B67)).